Reading from the N-terminus, the 139-residue chain is Small ribosomal subunit protein uS11 (139 aa).

Positions 117-139 are disordered; sequence VEDVTPIPHDGTRPKGGRRGRRV.

It belongs to the universal ribosomal protein uS11 family. As to quaternary structure, part of the 30S ribosomal subunit.

Its function is as follows. Located on the platform of the 30S subunit. This chain is Small ribosomal subunit protein uS11, found in Thermococcus onnurineus (strain NA1).